The chain runs to 172 residues: Female-specific lacrimal gland protein (172 aa).

The N-terminal stretch at 1–16 (MVKFLLLALALGVSCA) is a signal peptide. 2 disulfide bridges follow: Cys60-Cys64 and Cys79-Cys170.

The protein belongs to the calycin superfamily. Lipocalin family. As to expression, expressed in the lacrimal gland from where it is secreted into tears (at protein level).

Its subcellular location is the secreted. The protein is Female-specific lacrimal gland protein of Mesocricetus auratus (Golden hamster).